Here is a 64-residue protein sequence, read N- to C-terminus: MSQRQSGTVKWFNDEKGFGFITPQGGGDDLFVHFKAIESDGFKSLKEGQTVSFVAEKGQKGMQA.

One can recognise a CSD domain in the interval 7–64; sequence GTVKWFNDEKGFGFITPQGGGDDLFVHFKAIESDGFKSLKEGQTVSFVAEKGQKGMQA.

Its subcellular location is the cytoplasm. In terms of biological role, affects cell viability at low temperatures. The polypeptide is Cold shock protein CapA (capA) (Pseudomonas fragi).